We begin with the raw amino-acid sequence, 278 residues long: Large ribosomal subunit protein uL2 (278 aa).

2 stretches are compositionally biased toward basic residues: residues 210–219 (RKRWLGKRPQ) and 252–263 (KKSRGIKTRNSK). Residues 210–278 (RKRWLGKRPQ…LIIRHRKGNK (69 aa)) form a disordered region.

Belongs to the universal ribosomal protein uL2 family. In terms of assembly, part of the 50S ribosomal subunit. Forms a bridge to the 30S subunit in the 70S ribosome.

Its function is as follows. One of the primary rRNA binding proteins. Required for association of the 30S and 50S subunits to form the 70S ribosome, for tRNA binding and peptide bond formation. It has been suggested to have peptidyltransferase activity; this is somewhat controversial. Makes several contacts with the 16S rRNA in the 70S ribosome. The sequence is that of Large ribosomal subunit protein uL2 from Lactobacillus gasseri (strain ATCC 33323 / DSM 20243 / BCRC 14619 / CIP 102991 / JCM 1131 / KCTC 3163 / NCIMB 11718 / NCTC 13722 / AM63).